We begin with the raw amino-acid sequence, 209 residues long: Large ribosomal subunit protein uL3 (209 aa).

Gln150 carries the post-translational modification N5-methylglutamine.

It belongs to the universal ribosomal protein uL3 family. In terms of assembly, part of the 50S ribosomal subunit. Forms a cluster with proteins L14 and L19. Post-translationally, methylated by PrmB.

In terms of biological role, one of the primary rRNA binding proteins, it binds directly near the 3'-end of the 23S rRNA, where it nucleates assembly of the 50S subunit. The polypeptide is Large ribosomal subunit protein uL3 (Proteus mirabilis (strain HI4320)).